Consider the following 60-residue polypeptide: Large ribosomal subunit protein uL30 (60 aa).

The protein belongs to the universal ribosomal protein uL30 family. In terms of assembly, part of the 50S ribosomal subunit.

The sequence is that of Large ribosomal subunit protein uL30 from Shewanella sp. (strain ANA-3).